A 183-amino-acid polypeptide reads, in one-letter code: Orotate phosphoribosyltransferase (183 aa).

5-phospho-alpha-D-ribose 1-diphosphate contacts are provided by residues R100, K101, K104, H106, and 126–134 (EDVVTTGSS). The orotate site is built by T130 and R158.

Belongs to the purine/pyrimidine phosphoribosyltransferase family. PyrE subfamily. In terms of assembly, homodimer. Requires Mg(2+) as cofactor.

It carries out the reaction orotidine 5'-phosphate + diphosphate = orotate + 5-phospho-alpha-D-ribose 1-diphosphate. Its pathway is pyrimidine metabolism; UMP biosynthesis via de novo pathway; UMP from orotate: step 1/2. In terms of biological role, catalyzes the transfer of a ribosyl phosphate group from 5-phosphoribose 1-diphosphate to orotate, leading to the formation of orotidine monophosphate (OMP). This Aquifex aeolicus (strain VF5) protein is Orotate phosphoribosyltransferase.